The chain runs to 883 residues: Valine--tRNA ligase (883 aa).

The short motif at 46-56 is the 'HIGH' region element; the sequence is PNVTGKLHLGH. Positions 520-524 match the 'KMSKS' region motif; it reads KMSKS. Residue Lys523 participates in ATP binding. The stretch at 809 to 844 forms a coiled coil; it reads LADLLNVEEELARLEKELAKWQKELDMVGKKLSNER.

The protein belongs to the class-I aminoacyl-tRNA synthetase family. ValS type 1 subfamily. As to quaternary structure, monomer.

It is found in the cytoplasm. The catalysed reaction is tRNA(Val) + L-valine + ATP = L-valyl-tRNA(Val) + AMP + diphosphate. Catalyzes the attachment of valine to tRNA(Val). As ValRS can inadvertently accommodate and process structurally similar amino acids such as threonine, to avoid such errors, it has a 'posttransfer' editing activity that hydrolyzes mischarged Thr-tRNA(Val) in a tRNA-dependent manner. This is Valine--tRNA ligase from Streptococcus thermophilus (strain CNRZ 1066).